The chain runs to 335 residues: Anthranilate phosphoribosyltransferase (335 aa).

5-phospho-alpha-D-ribose 1-diphosphate contacts are provided by residues G79, G82–D83, T87, N89–T92, K107–S115, and A119. G79 contributes to the anthranilate binding site. S91 contacts Mg(2+). N110 contacts anthranilate. R165 contributes to the anthranilate binding site. D224 and E225 together coordinate Mg(2+).

It belongs to the anthranilate phosphoribosyltransferase family. In terms of assembly, homodimer. Mg(2+) serves as cofactor.

It carries out the reaction N-(5-phospho-beta-D-ribosyl)anthranilate + diphosphate = 5-phospho-alpha-D-ribose 1-diphosphate + anthranilate. Its pathway is amino-acid biosynthesis; L-tryptophan biosynthesis; L-tryptophan from chorismate: step 2/5. In terms of biological role, catalyzes the transfer of the phosphoribosyl group of 5-phosphorylribose-1-pyrophosphate (PRPP) to anthranilate to yield N-(5'-phosphoribosyl)-anthranilate (PRA). This is Anthranilate phosphoribosyltransferase from Methanobrevibacter smithii (strain ATCC 35061 / DSM 861 / OCM 144 / PS).